A 226-amino-acid chain; its full sequence is UPF0758 protein M6_Spy0838 (226 aa).

The MPN domain occupies 103–225; the sequence is SVLTSVQVAE…YYSFREKSTL (123 aa). Residues H174, H176, and D187 each contribute to the Zn(2+) site. The JAMM motif signature appears at 174–187; it reads HNHPSGNIEPSSND.

This sequence belongs to the UPF0758 family.

The polypeptide is UPF0758 protein M6_Spy0838 (Streptococcus pyogenes serotype M6 (strain ATCC BAA-946 / MGAS10394)).